Here is a 285-residue protein sequence, read N- to C-terminus: Nucleotide-binding protein Pfl01_0854 (285 aa).

G8–S15 contacts ATP. A GTP-binding site is contributed by D60–N63.

This sequence belongs to the RapZ-like family.

Displays ATPase and GTPase activities. The polypeptide is Nucleotide-binding protein Pfl01_0854 (Pseudomonas fluorescens (strain Pf0-1)).